Consider the following 465-residue polypeptide: Phenylalanine--tRNA ligase alpha subunit (465 aa).

L-phenylalanine contacts are provided by Thr311 and Phe389. Glu391 is a binding site for Mg(2+).

This sequence belongs to the class-II aminoacyl-tRNA synthetase family. Phe-tRNA synthetase alpha subunit type 2 subfamily. As to quaternary structure, tetramer of two alpha and two beta subunits. Requires Mg(2+) as cofactor.

It is found in the cytoplasm. The enzyme catalyses tRNA(Phe) + L-phenylalanine + ATP = L-phenylalanyl-tRNA(Phe) + AMP + diphosphate + H(+). In Metallosphaera sedula (strain ATCC 51363 / DSM 5348 / JCM 9185 / NBRC 15509 / TH2), this protein is Phenylalanine--tRNA ligase alpha subunit.